The chain runs to 2372 residues: Nonribosomal peptide synthase roqA (2372 aa).

The adenylation 1 stretch occupies residues 217-610 (EHCRSQPDAE…VGRKDREVKI (394 aa)). Residues 723–745 (AASSHSSTREQPSNQRDKEDVEL) form a disordered region. Residues 725-736 (SSHSSTREQPSN) show a composition bias toward polar residues. A Carrier 1 domain is found at 750-823 (SAKENTLCSV…KIARCTAESK (74 aa)). S784 carries the O-(pantetheine 4'-phosphoryl)serine modification. A condensation 1 region spans residues 856 to 1122 (EDIYPCTPLQ…FATFPFRTQL (267 aa)). The adenylation 2 stretch occupies residues 1290 to 1679 (QPNSEAVCAW…VGRKDTQVKL (390 aa)). The region spanning 1819–1895 (KPTTEQERFV…LFCKHVILIQ (77 aa)) is the Carrier 2 domain. S1856 carries the O-(pantetheine 4'-phosphoryl)serine modification. Residues 1962–2227 (TSNYTSTAIF…FNVLPCRIAI (266 aa)) form a condensation 2 region.

The protein operates within alkaloid biosynthesis. In terms of biological role, dipeptide synthase; part of the gene cluster that mediates the biosynthesis of the mycotoxins roquefortine C and meleagrin. The first stage is catalyzed by the dipeptide synthase roqA which condenses histidine and tryptophan to produce histidyltryptophanyldiketopiperazine (HTD). HTD is then converted to roquefortine C through two possible pathways. In the first pathway, prenyltransferase roqD transforms HTD to the intermediate roquefortine D, which is in turn converted to roquefortine C by the cytochrome P450 monooxygenase roqR. In the second pathway, HTD is first converted to the intermediate dehydrohistidyltryptophanyldi-ketopiperazine (DHTD) by roqR which is then prenylated by roqD to form roquefortine C. Roquefortine C can be further transformed to meleagrin via three more reactions including oxydation to glandicolin A by roqM, which is further reduced to glandicoline B by roqO. Finally, glandicoline B is converted to meleagrin by the glandicoline B O-methyltransferase roqN. More studies identified further branching and additional metabolites produced by the roquefortine/meleagrin cluster, including roquefortine F, roquefortine L, roquefortine M, roquefortine N and neoxaline. The sequence is that of Nonribosomal peptide synthase roqA from Penicillium rubens (strain ATCC 28089 / DSM 1075 / NRRL 1951 / Wisconsin 54-1255) (Penicillium chrysogenum).